The sequence spans 891 residues: Iron-regulated surface determinant protein H (891 aa).

A signal peptide spans 1-40 (MNKHHPKLRSFYSIRKSTLGVASVIVSTLFLITSQHQAQA). The tract at residues 42–77 (ENTNTSDKISENQNNNATTTQQPKDTNQTQPATQPV) is disordered. A compositionally biased stretch (low complexity) spans 53 to 63 (NQNNNATTTQQ). Residues 64-77 (PKDTNQTQPATQPV) are compositionally biased toward polar residues. Positions 105–232 (DIGPREQVNF…IYNDPSLVKS (128 aa)) constitute an NEAT 1 domain. The interval 239–324 (VTNDQSSSDA…NQSDVNQQYP (86 aa)) is disordered. Low complexity predominate over residues 240 to 276 (TNDQSSSDASNQTNTNTSNQNTSTTNNANNQPQATTN). Residues 277–323 (MSQPAQPKSSANADQASSQPAHETNSNGNTNDKTNESSNQSDVNQQY) are compositionally biased toward polar residues. NEAT domains lie at 345–471 (TADN…DYVD) and 543–660 (QLTD…TKDD). Disordered regions lie at residues 657-718 (TKDD…DADN), 752-777 (IAKDTDRNVDNSVGMSSNVDTDKDSN), and 835-864 (TVKTKEKAGTPSKENKLSQSKMLPKTGETT). 2 stretches are compositionally biased toward polar residues: residues 663–677 (SQNNTSEPLNVQTGQ) and 687–697 (AENSSTATNPK). A compositionally biased stretch (basic and acidic residues) spans 698-718 (DASDKADVIEPESDVVKDADN). A compositionally biased stretch (basic and acidic residues) spans 835–850 (TVKTKEKAGTPSKENK). The segment covering 851–864 (LSQSKMLPKTGETT) has biased composition (polar residues). Residues 857-861 (LPKTG) carry the LPXTG sorting signal motif. Pentaglycyl murein peptidoglycan amidated threonine is present on Thr860. Residues 861-891 (GETTSSQSWWGLYALLGMLALFIPKFRKESK) constitute a propeptide, removed by sortase.

Belongs to the IsdH family.

It localises to the secreted. The protein localises to the cell wall. Its function is as follows. Binds human plasma haptoglobin-hemoglobin complexes, haptoglobin and hemoglobin. Binds haptoglobin-hemoglobin complexes with significantly higher affinity than haptoglobin alone. In Staphylococcus aureus (strain Mu50 / ATCC 700699), this protein is Iron-regulated surface determinant protein H (isdH).